The primary structure comprises 1707 residues: Kinesin-like protein KIF1A (1707 aa).

In terms of domain architecture, Kinesin motor spans 5-354 (SVKVAVRVRP…LRYADRAKQI (350 aa)). Gly102, Lys103, Ser104, Tyr105, and Ser215 together coordinate ATP. A Mg(2+)-binding site is contributed by Ser104. Residues 439–466 (SEEAIERLKETEKIIAELNETWEEKLRR) adopt a coiled-coil conformation. Residues 525-581 (TRVGREDAERRQDIVLSGHFIKEEHCIFRSDSRGGGEAVVTLEPCEGADTYVNGKKV) form the FHA domain. Coiled coils occupy residues 637 to 671 (EKQGIDMKQEMEQRLQELEDQYRREREEATYLLEQ) and 811 to 831 (LEKLRQRLDLMREMYDRAAEV). The required for interaction with CALM1, PPFIA2 and TANC2 stretch occupies residues 657-1105 (QYRREREEAT…LCKDVLSPLR (449 aa)). 2 disordered regions span residues 1424-1462 (PVPEVLSPASSEDSESRSSSGASSPLSAEGQPSPLEVPN) and 1536-1576 (TDVR…EKEP). Over residues 1429 to 1453 (LSPASSEDSESRSSSGASSPLSAEG) the composition is skewed to low complexity. Residues 1592–1690 (IVSKKGYLHF…WLYAFNPLLA (99 aa)) enclose the PH domain.

It belongs to the TRAFAC class myosin-kinesin ATPase superfamily. Kinesin family. Unc-104 subfamily. As to quaternary structure, dimeric motor; dimerization is required for ATP-driven processive motility. Monomer in vitro. Interacts with PPFIA1 and PPFIA4. Interacts with CALM1; the interaction is increased in presence of calcium and increases neuronal dense core vesicles motility. Interacts with PPFIA2 and TANC2; both interactions allow the recruitment of neuronal dense core vesicles to dendritic spines and decrease in presence of calcium. Interacts with SYT4 (unphosphorylated) and SYT11; both interactions increase in presence of calcium. Interacts with MADD.

It localises to the cytoplasm. It is found in the cytoskeleton. Its subcellular location is the cell projection. The protein localises to the neuron projection. The protein resides in the axon. It localises to the perinuclear region. It is found in the synapse. Its subcellular location is the cytoplasmic vesicle. The protein localises to the secretory vesicle. The protein resides in the neuronal dense core vesicle membrane. The enzyme catalyses ATP + H2O + a kinesin associated with a microtubule at position (n) = ADP + phosphate a kinesin associated with a microtubule at position (n+1, toward the plus end).. Functionally, kinesin motor with a plus-end-directed microtubule motor activity, involved in anterograde axonal transport of synaptic vesicle precursors. Also required for neuronal dense core vesicles (DCVs) transport to the dendritic spines and axons. The interaction calcium-dependent with CALM1 increases vesicle motility and interaction with the scaffolding proteins PPFIA2 and TANC2 recruits DCVs to synaptic sites. This Rattus norvegicus (Rat) protein is Kinesin-like protein KIF1A.